A 679-amino-acid chain; its full sequence is MLTWETPVMLASNTASTKKLAFITTFLIIVLCPVTMVMSQPQADVLPLPASDADCLLRFKDTLVNASFISSWDPSISPCKRNSENWFGVLCVTGNVWGLQLEGMGLTGKLDLEPLAAIKNLRTLSFMNNKFNGSMPSVKNFGALKSLYLSNNRFTGEIPADAFDGMHHLKKLLLANNAFRGSIPSSLAYLPMLLELRLNGNQFHGEIPYFKQKDLKLASFENNDLEGPIPESLSNMDPVSFSGNKNLCGPPLSPCSSDSGSSPDLPSSPTEKNKNQSFFIIAIVLIVIGIILMIISLVVCILHTRRRKSLSAYPSAGQDRTEKYNYDQSTDKDKAADSVTSYTSRRGAVPDQNKLLFLQDDIQRFDLQDLLRASAEVLGSGSFGSSYKTGINSGQMLVVKRYKHMNNVGRDEFHEHMRRLGRLKHPNLLPIVAYYYRREEKLLIAEFMPNRSLASHLHANHSVDQPGLDWPTRLKIIQGVAKGLGYLFNELTTLTIPHGHLKSSNVVLDESFEPLLTDYALRPVMNSEQSHNLMISYKSPEYSLKGHLTKKTDVWCLGVLILELLTGRFPENYLSQGYDANMSLVTWVSNMVKEKKTGDVFDKEMTGKKNCKAEMLNLLKIGLSCCEEDEERRMEMRDAVEKIERLKEGEFDNDFASTTHNVFASRLIDDDDFGFAMNR.

The signal sequence occupies residues 1 to 39 (MLTWETPVMLASNTASTKKLAFITTFLIIVLCPVTMVMS). 5 LRR repeats span residues 118–141 (IKNLRTLSFMNNKFNGSMPSVKNF), 142–165 (GALKSLYLSNNRFTGEIPADAFDG), 167–191 (HHLKKLLLANNAFRGSIPSSLAYLP), 193–217 (LLELRLNGNQFHGEIPYFKQKDLKL), and 234–257 (SNMDPVSFSGNKNLCGPPLSPCSS). A compositionally biased stretch (low complexity) spans 252–269 (LSPCSSDSGSSPDLPSSP). The interval 252–271 (LSPCSSDSGSSPDLPSSPTE) is disordered. A helical transmembrane segment spans residues 278–298 (FFIIAIVLIVIGIILMIISLV). The tract at residues 311–344 (SAYPSAGQDRTEKYNYDQSTDKDKAADSVTSYTS) is disordered. Residues 319–336 (DRTEKYNYDQSTDKDKAA) show a composition bias toward basic and acidic residues. Positions 372-646 (RASAEVLGSG…RDAVEKIERL (275 aa)) constitute a Protein kinase domain. S374 is modified (phosphoserine). ATP-binding positions include 378–386 (LGSGSFGSS) and K400. Residues S452 and S455 each carry the phosphoserine modification. Residue T472 is modified to Phosphothreonine. The residue at position 542 (Y542) is a Phosphotyrosine.

The protein belongs to the protein kinase superfamily. Ser/Thr protein kinase family. As to quaternary structure, interacts in vitro with ROPGEF1 (via PRONE domain). Interacts weakly with the GRI peptide. Expressed in pollen and/or in flowers, but not in leaves.

It localises to the membrane. The catalysed reaction is L-seryl-[protein] + ATP = O-phospho-L-seryl-[protein] + ADP + H(+). It catalyses the reaction L-threonyl-[protein] + ATP = O-phospho-L-threonyl-[protein] + ADP + H(+). In terms of biological role, receptor-like kinase involved in the control of pollen germination and pollen tube polar growth. Can phosphorylate ROPGEF1 in vitro. This chain is Pollen receptor-like kinase 4, found in Arabidopsis thaliana (Mouse-ear cress).